We begin with the raw amino-acid sequence, 1241 residues long: RNA polymerase II C-terminal domain phosphatase-like 3 (1241 aa).

Disordered regions lie at residues 361–402 (DHDA…TTEG), 428–470 (VFKT…HLIY), 505–525 (ISAP…RDPR), 578–598 (KRQK…WLED), 677–702 (AIQK…VSTP), 720–800 (VLQD…QNGT), and 852–885 (TERD…GPTR). Over residues 368 to 378 (PSPTRETTPSL) the composition is skewed to polar residues. The span at 441–466 (GEPNDGNGDVGGEVSSSVVKSSNPGS) shows a compositional bias: low complexity. Residues 677-686 (AIQKPMDPRR) show a composition bias toward basic and acidic residues. Polar residues-rich tracts occupy residues 691-702 (PGSSVQPGVSTP) and 791-800 (PRQNISQNGT). Residues 871–881 (SVSAASVTAAA) are compositionally biased toward low complexity. Positions 923 to 1103 (FASQKLSLVL…GLLGPSLLEL (181 aa)) constitute an FCP1 homology domain. One can recognise a BRCT domain in the interval 1146–1239 (EQRKILAGCR…QRANENLYAI (94 aa)).

As to quaternary structure, interacts with RAP74. Mg(2+) is required as a cofactor. Co(2+) serves as cofactor. Requires Mn(2+) as cofactor.

It localises to the nucleus. The catalysed reaction is O-phospho-L-seryl-[protein] + H2O = L-seryl-[protein] + phosphate. It catalyses the reaction O-phospho-L-threonyl-[protein] + H2O = L-threonyl-[protein] + phosphate. Completely dephosphorylates 'Ser-2', and partially 'Ser-5' and 'Ser-7' of the heptad repeats YSPTSPS in the C-terminal domain (CTD) of the largest RNA polymerase II subunit (RPB1). Involved in defense response. Acts as a negative regulator of immune gene expression and immunity to pathogen infections. Preferentially dephosphorylates 'Ser-2' of RNA polymerase II CTD. This counterregulates the MAP kinase (MAPK) or cyclin-dependent kinase C (CDKC)-mediated phosphorylation of CTD in response to pathogens and upon perception of microbe-associated molecular patterns (MAMPs). MAPKs phosphorylate and activate CDKCs, which are CTD kinases that positively regulate plant innate immunity. Acts as a negative regulator of stress gene transcription involved in abscisic acid (ABA) mediated signaling pathway and cold resistance. Acts as a post-transcriptional gene silencing (PTGS) suppressor. The polypeptide is RNA polymerase II C-terminal domain phosphatase-like 3 (Arabidopsis thaliana (Mouse-ear cress)).